A 403-amino-acid polypeptide reads, in one-letter code: Probable tRNA sulfurtransferase (403 aa).

The THUMP domain occupies 60–165 (KLAEERLKPI…KEGVFLSCRT (106 aa)). ATP is bound by residues 183-184 (ML), 208-209 (HF), arginine 265, glycine 287, and glutamine 296.

This sequence belongs to the ThiI family.

The protein resides in the cytoplasm. It catalyses the reaction [ThiI sulfur-carrier protein]-S-sulfanyl-L-cysteine + a uridine in tRNA + 2 reduced [2Fe-2S]-[ferredoxin] + ATP + H(+) = [ThiI sulfur-carrier protein]-L-cysteine + a 4-thiouridine in tRNA + 2 oxidized [2Fe-2S]-[ferredoxin] + AMP + diphosphate. It carries out the reaction [ThiS sulfur-carrier protein]-C-terminal Gly-Gly-AMP + S-sulfanyl-L-cysteinyl-[cysteine desulfurase] + AH2 = [ThiS sulfur-carrier protein]-C-terminal-Gly-aminoethanethioate + L-cysteinyl-[cysteine desulfurase] + A + AMP + 2 H(+). It participates in cofactor biosynthesis; thiamine diphosphate biosynthesis. Functionally, catalyzes the ATP-dependent transfer of a sulfur to tRNA to produce 4-thiouridine in position 8 of tRNAs, which functions as a near-UV photosensor. Also catalyzes the transfer of sulfur to the sulfur carrier protein ThiS, forming ThiS-thiocarboxylate. This is a step in the synthesis of thiazole, in the thiamine biosynthesis pathway. The sulfur is donated as persulfide by IscS. This is Probable tRNA sulfurtransferase from Listeria welshimeri serovar 6b (strain ATCC 35897 / DSM 20650 / CCUG 15529 / CIP 8149 / NCTC 11857 / SLCC 5334 / V8).